A 464-amino-acid polypeptide reads, in one-letter code: Chitobiosyldiphosphodolichol beta-mannosyltransferase (464 aa).

Topologically, residues 1 to 2 (MA) are lumenal. The chain crosses the membrane as a helical span at residues 3 to 23 (ASCLVLLALCLLLPLLLLGGW). Topologically, residues 24–99 (KRWRRGRTAR…ELQSLAVGPR (76 aa)) are cytoplasmic. An intramembrane region (helical) is located at residues 100–120 (VFQYGVKVVFQAMYLLWKLMW). Residues 121 to 464 (REPGAYIFLQ…QTVLPLVMDT (344 aa)) lie on the Cytoplasmic side of the membrane. Position 242 is a phosphoserine (Ser-242). The tract at residues 242–261 (SPFRARSEPEDPATERSAFT) is disordered.

This sequence belongs to the glycosyltransferase group 1 family. Glycosyltransferase 33 subfamily.

It is found in the endoplasmic reticulum membrane. The catalysed reaction is an N,N'-diacetylchitobiosyl-diphospho-di-trans,poly-cis-dolichol + GDP-alpha-D-mannose = a beta-D-Man-(1-&gt;4)-beta-D-GlcNAc-(1-&gt;4)-alpha-D-GlcNAc-diphospho-di-trans,poly-cis-dolichol + GDP + H(+). The protein operates within protein modification; protein glycosylation. Functionally, mannosyltransferase that operates in the biosynthetic pathway of dolichol-linked oligosaccharides, the glycan precursors employed in protein asparagine (N)-glycosylation. The assembly of dolichol-linked oligosaccharides begins on the cytosolic side of the endoplasmic reticulum membrane and finishes in its lumen. The sequential addition of sugars to dolichol pyrophosphate produces dolichol-linked oligosaccharides containing fourteen sugars, including two GlcNAcs, nine mannoses and three glucoses. Once assembled, the oligosaccharide is transferred from the lipid to nascent proteins by oligosaccharyltransferases. Catalyzes, on the cytoplasmic face of the endoplasmic reticulum, the addition of the first mannose residues to the dolichol-linked oligosaccharide chain, to produce Man1GlcNAc(2)-PP-dolichol core oligosaccharide. Man1GlcNAc(2)-PP-dolichol is a substrate for ALG2, the following enzyme in the biosynthetic pathway. This chain is Chitobiosyldiphosphodolichol beta-mannosyltransferase, found in Pongo abelii (Sumatran orangutan).